Consider the following 238-residue polypeptide: DnaA regulatory inactivator Hda (238 aa).

This sequence belongs to the DnaA family. HdA subfamily. In terms of assembly, the active form seems to be an ADP-bound monomer. Forms the RIDA complex (regulatory inactivation of DnaA) of ATP-DnaA, ADP-Hda and the DNA-loaded beta sliding clamp (dnaN).

In terms of biological role, mediates the interaction of DNA replication initiator protein DnaA with DNA polymerase subunit beta sliding clamp (dnaN). Stimulates hydrolysis of ATP-DnaA to ADP-DnaA, rendering DnaA inactive for reinitiation, a process called regulatory inhibition of DnaA or RIDA. This chain is DnaA regulatory inactivator Hda, found in Pectobacterium atrosepticum (strain SCRI 1043 / ATCC BAA-672) (Erwinia carotovora subsp. atroseptica).